A 403-amino-acid chain; its full sequence is MRGRRGDRMTINIQEHMAINVCPGPIRPIRQISDYFPRRGPGPEGGGGGRGFGEAPAHLAPLALAPPAALLGATTPDDGAEVDSYDSDDTTALGTLEFDLLYDQASCMLHCRILRAKGLKPMDFNGLADPYVKLHLLPGACKANKLKTKTQRNTLNPVWNEELTYSGITDDDITHKVLRISVCDEDKLSHNEFIGEIRVPLRRLKPSQKKHFNICLERQVPLPSPSSMSAALRGISCYLKELEQAEQGPGLLEERGRILLSLSYSSRRHGLLVGIVRCAHLAAMDVNGYSDPYVKTYLRPDVDKKSKHKTCVKKKTLNPEFNEEFFYEMELSTLATKTLEVTVWDYDIGKSNDFIGGVSLGPGARGEAQKHWRDCLHQPDTAVERWHTLTSELPPAAGALPLA.

The segment at 1-92 (MRGRRGDRMT…DSYDSDDTTA (92 aa)) is interaction with UNC13D and DYNLT1. C2 domains are found at residues 92–214 (ALGT…HFNI) and 254–387 (ERGR…ERWH). Ca(2+) contacts are provided by Asp123, Asp129, Asp184, Asp186, Asp285, Asp291, Asp345, Asp347, and Asp353. The interaction with UNC13D stretch occupies residues 218-403 (RQVPLPSPSS…PPAAGALPLA (186 aa)).

Interacts (via N-terminus) with UNC13A. Interacts with cytoplasmic dynein light chain DYNLT1. Interacts with UNC13D. The cofactor is Ca(2+). Predominantly expressed in brain. Also found in non-neural tissues. Expressed in RBL-2H3 mast cell line.

It is found in the cytoplasmic vesicle. It localises to the secretory vesicle. The protein localises to the synaptic vesicle membrane. The protein resides in the synapse. Its subcellular location is the synaptosome. It is found in the lysosome. In terms of biological role, calcium sensor which most probably regulates fusion of vesicles with membranes. Binds calcium and phospholipids. May be involved in calcium dependent neurotransmitter release through the interaction with UNC13A. May be involved in calcium-dependent spontaneous release of neurotransmitter in absence of action potentials in neuronal cells. Regulates Ca(2+)-dependent secretory lysosome exocytosis in mast cells. The polypeptide is Double C2-like domain-containing protein alpha (Doc2a) (Rattus norvegicus (Rat)).